The chain runs to 350 residues: Ketol-acid reductoisomerase (NADP(+)) (350 aa).

The region spanning 4–187 (VSITTDYSRM…GGARANIIKT (184 aa)) is the KARI N-terminal Rossmann domain. NADP(+) contacts are provided by residues 30–33 (YGSQ), Arg53, Thr58, and 88–91 (DMVQ). The active site involves His113. Gly139 provides a ligand contact to NADP(+). The KARI C-terminal knotted domain maps to 188–333 (TFKEETETDL…KQLRAKMVWL (146 aa)). Mg(2+) contacts are provided by Asp196, Glu200, Glu232, and Glu236. Ser257 provides a ligand contact to substrate.

The protein belongs to the ketol-acid reductoisomerase family. It depends on Mg(2+) as a cofactor.

It catalyses the reaction (2R)-2,3-dihydroxy-3-methylbutanoate + NADP(+) = (2S)-2-acetolactate + NADPH + H(+). It carries out the reaction (2R,3R)-2,3-dihydroxy-3-methylpentanoate + NADP(+) = (S)-2-ethyl-2-hydroxy-3-oxobutanoate + NADPH + H(+). It participates in amino-acid biosynthesis; L-isoleucine biosynthesis; L-isoleucine from 2-oxobutanoate: step 2/4. It functions in the pathway amino-acid biosynthesis; L-valine biosynthesis; L-valine from pyruvate: step 2/4. Its function is as follows. Involved in the biosynthesis of branched-chain amino acids (BCAA). Catalyzes an alkyl-migration followed by a ketol-acid reduction of (S)-2-acetolactate (S2AL) to yield (R)-2,3-dihydroxy-isovalerate. In the isomerase reaction, S2AL is rearranged via a Mg-dependent methyl migration to produce 3-hydroxy-3-methyl-2-ketobutyrate (HMKB). In the reductase reaction, this 2-ketoacid undergoes a metal-dependent reduction by NADPH to yield (R)-2,3-dihydroxy-isovalerate. The polypeptide is Ketol-acid reductoisomerase (NADP(+)) (Xylella fastidiosa (strain Temecula1 / ATCC 700964)).